The chain runs to 181 residues: Protein CRABS CLAW (181 aa).

The C4-type zinc finger occupies 26 to 53 (CSICNTILAVGIPLKRMLDTVTVKCGHC). A disordered region spans residues 80-122 (GSDYKKGSSSSSSSSTSSDQPPSPSPPFVVKPPEKKQRLPSAY). Over residues 87 to 99 (SSSSSSSSTSSDQ) the composition is skewed to low complexity. Residues 100–109 (PPSPSPPFVV) are compositionally biased toward pro residues.

It belongs to the YABBY family. Restricted to flowers, mostly in carpels and nectaries. Expressed at low levels in sepal primordia (buds), sepal receptacle and developing petal. Not detected in placental tissues, septum, stigma and ovules.

The protein resides in the nucleus. Its function is as follows. Transcription factor required for the initiation of nectary development. Also involved in suppressing early radial growth of the gynoecium, in promoting its later elongation and in fusion of its carpels by regulating both cell division and expansion. Establishes the polar differentiation in the carpels by specifying abaxial cell fate in the ovary wall. Regulates both cell division and expansion. In Arabidopsis thaliana (Mouse-ear cress), this protein is Protein CRABS CLAW.